Consider the following 165-residue polypeptide: Small ribosomal subunit protein uS5 (165 aa).

The region spanning 13–76 (LEEKVLVVNR…EAARKNLITI (64 aa)) is the S5 DRBM domain.

It belongs to the universal ribosomal protein uS5 family. As to quaternary structure, part of the 30S ribosomal subunit. Contacts proteins S4 and S8.

In terms of biological role, with S4 and S12 plays an important role in translational accuracy. Its function is as follows. Located at the back of the 30S subunit body where it stabilizes the conformation of the head with respect to the body. The sequence is that of Small ribosomal subunit protein uS5 from Chlamydia caviae (strain ATCC VR-813 / DSM 19441 / 03DC25 / GPIC) (Chlamydophila caviae).